Reading from the N-terminus, the 177-residue chain is Bifunctional protein PyrR (177 aa).

Positions valine 99 to threonine 111 match the PRPP-binding motif.

Belongs to the purine/pyrimidine phosphoribosyltransferase family. PyrR subfamily. As to quaternary structure, homodimer and homohexamer; in equilibrium.

The catalysed reaction is UMP + diphosphate = 5-phospho-alpha-D-ribose 1-diphosphate + uracil. Its function is as follows. Regulates transcriptional attenuation of the pyrimidine nucleotide (pyr) operon by binding in a uridine-dependent manner to specific sites on pyr mRNA. This disrupts an antiterminator hairpin in the RNA and favors formation of a downstream transcription terminator, leading to a reduced expression of downstream genes. Also displays a weak uracil phosphoribosyltransferase activity which is not physiologically significant. The protein is Bifunctional protein PyrR of Clostridioides difficile (strain 630) (Peptoclostridium difficile).